A 37-amino-acid polypeptide reads, in one-letter code: Large ribosomal subunit protein bL36 (37 aa).

It belongs to the bacterial ribosomal protein bL36 family.

The polypeptide is Large ribosomal subunit protein bL36 (Thermosynechococcus vestitus (strain NIES-2133 / IAM M-273 / BP-1)).